A 231-amino-acid polypeptide reads, in one-letter code: Ion-translocating oxidoreductase complex subunit E (231 aa).

Transmembrane regions (helical) follow at residues 18–38, 39–59, 63–83, 86–106, 125–145, and 182–202; these read ALVQ…ATNA, LGLG…ISTL, TPAE…VSAV, LINA…PLIV, ALSA…MFVL, and PFLL…MLAG.

Belongs to the NqrDE/RnfAE family. The complex is composed of six subunits: RsxA, RsxB, RsxC, RsxD, RsxE and RsxG.

It is found in the cell inner membrane. Functionally, part of a membrane-bound complex that couples electron transfer with translocation of ions across the membrane. Required to maintain the reduced state of SoxR. This is Ion-translocating oxidoreductase complex subunit E from Shigella boydii serotype 18 (strain CDC 3083-94 / BS512).